The primary structure comprises 346 residues: tRNA pseudouridine synthase D (346 aa).

The Nucleophile role is filled by aspartate 81. Residues 157–303 enclose the TRUD domain; sequence GVPNYFGLQR…MKHERRILRL (147 aa).

The protein belongs to the pseudouridine synthase TruD family.

The catalysed reaction is uridine(13) in tRNA = pseudouridine(13) in tRNA. Functionally, responsible for synthesis of pseudouridine from uracil-13 in transfer RNAs. This is tRNA pseudouridine synthase D from Stutzerimonas stutzeri (strain A1501) (Pseudomonas stutzeri).